Reading from the N-terminus, the 275-residue chain is MQNITHSWFVQGMIKATSDAWLKGWDERNGGNLTLRLDEADIAPFTDDFHQEPRYIALSQPMPLLANTPFIVTGSGKFFRNVQLDPAANLGVVKVDSDGAGYHILWGLNHEAVPTSELPAHFLSHCERINATDGKDRVIMHCHATNLIALTYVLENNTPLFTRKLWEGSTECLVVFPDGVGILPWMVPGTDEIGQATAQEMQKHSLVLWPFHGVFGSGPTLDETFGLIDTAEKSAEVLVKIYSMGGMKQTITREELVALGKRFGVTPLASALALY.

The active site involves Glu-117. Residues His-141, His-143, and His-212 each coordinate Zn(2+).

It belongs to the aldolase class II family. RhaD subfamily. As to quaternary structure, homotetramer. Zn(2+) is required as a cofactor.

Its subcellular location is the cytoplasm. The catalysed reaction is L-rhamnulose 1-phosphate = (S)-lactaldehyde + dihydroxyacetone phosphate. The protein operates within carbohydrate degradation; L-rhamnose degradation; glycerone phosphate from L-rhamnose: step 3/3. In terms of biological role, catalyzes the reversible cleavage of L-rhamnulose-1-phosphate to dihydroxyacetone phosphate (DHAP) and L-lactaldehyde. This is Rhamnulose-1-phosphate aldolase from Citrobacter koseri (strain ATCC BAA-895 / CDC 4225-83 / SGSC4696).